A 313-amino-acid chain; its full sequence is Protein FixB (313 aa).

L255–D283 is a binding site for FAD.

It belongs to the ETF alpha-subunit/FixB family. Heterodimer of FixA and FixB.

The protein operates within amine and polyamine metabolism; carnitine metabolism. Required for anaerobic carnitine reduction. May bring reductant to CaiA. In Escherichia coli O139:H28 (strain E24377A / ETEC), this protein is Protein FixB.